The chain runs to 83 residues: uncharacterized protein (83 aa).

This is an uncharacterized protein from Methanocaldococcus jannaschii (strain ATCC 43067 / DSM 2661 / JAL-1 / JCM 10045 / NBRC 100440) (Methanococcus jannaschii).